Here is a 137-residue protein sequence, read N- to C-terminus: Large ribosomal subunit protein uL16 (137 aa).

This sequence belongs to the universal ribosomal protein uL16 family. Part of the 50S ribosomal subunit.

In terms of biological role, binds 23S rRNA and is also seen to make contacts with the A and possibly P site tRNAs. The sequence is that of Large ribosomal subunit protein uL16 from Coxiella burnetii (strain RSA 331 / Henzerling II).